The sequence spans 315 residues: MAGSVTVADLVKNTRLDVYHGADLLEKKDITTSDISRPGLALTGYFNYYPRERVQLLGKTETAYSKNMSHDERLMIFRKMCQLTTPAFVISTGLPVPEELVQAGEENGVPILGTKMTSSRILSNMTNYLEGKLAERQSVHGVLVDIYGLGVLITGDSGVGKSETALELVKRGHRLIADDRVDVYQQDEQTLVGEAPAILNHLLEIRGIGIIDVMNLFGAGAVRQDTDIDLIVHLENWTPDKQFDRLGNGEQNRKFFDVEVPEISIPVKTGRNLAIIIEAAAMNFRAESMGYDATKVFDDNLNKLIKTNSVHDSHK.

Active-site residues include histidine 140 and lysine 161. 155-162 contributes to the ATP binding site; sequence GDSGVGKS. Position 162 (serine 162) interacts with Mg(2+). The Proton acceptor; for phosphorylation activity. Proton donor; for dephosphorylation activity role is filled by aspartate 179. Residues 203-212 are important for the catalytic mechanism of both phosphorylation and dephosphorylation; sequence LEIRGIGIID. Mg(2+) is bound at residue glutamate 204. Arginine 245 is an active-site residue. An important for the catalytic mechanism of dephosphorylation region spans residues 266–271; that stretch reads PVKTGR.

It belongs to the HPrK/P family. Homohexamer. Requires Mg(2+) as cofactor.

The enzyme catalyses [HPr protein]-L-serine + ATP = [HPr protein]-O-phospho-L-serine + ADP + H(+). It catalyses the reaction [HPr protein]-O-phospho-L-serine + phosphate + H(+) = [HPr protein]-L-serine + diphosphate. Catalyzes the ATP- as well as the pyrophosphate-dependent phosphorylation of a specific serine residue in HPr, a phosphocarrier protein of the phosphoenolpyruvate-dependent sugar phosphotransferase system (PTS). HprK/P also catalyzes the pyrophosphate-producing, inorganic phosphate-dependent dephosphorylation (phosphorolysis) of seryl-phosphorylated HPr (P-Ser-HPr). The two antagonistic activities of HprK/P are regulated by several intracellular metabolites, which change their concentration in response to the absence or presence of rapidly metabolisable carbon sources (glucose, fructose, etc.) in the growth medium. Therefore, by controlling the phosphorylation state of HPr, HPrK/P is a sensor enzyme that plays a major role in the regulation of carbon metabolism and sugar transport: it mediates carbon catabolite repression (CCR), and regulates PTS-catalyzed carbohydrate uptake and inducer exclusion. This is HPr kinase/phosphorylase from Lactiplantibacillus plantarum (strain ATCC BAA-793 / NCIMB 8826 / WCFS1) (Lactobacillus plantarum).